The primary structure comprises 340 residues: Anthranilate phosphoribosyltransferase (340 aa).

5-phospho-alpha-D-ribose 1-diphosphate is bound by residues G82, 85 to 86 (GD), T90, 92 to 95 (NISS), 110 to 118 (KHGGRSVSS), and A122. G82 is a binding site for anthranilate. S94 contributes to the Mg(2+) binding site. R168 contacts anthranilate. Mg(2+) is bound by residues D227 and E228.

It belongs to the anthranilate phosphoribosyltransferase family. As to quaternary structure, homodimer. The cofactor is Mg(2+).

It catalyses the reaction N-(5-phospho-beta-D-ribosyl)anthranilate + diphosphate = 5-phospho-alpha-D-ribose 1-diphosphate + anthranilate. Its pathway is amino-acid biosynthesis; L-tryptophan biosynthesis; L-tryptophan from chorismate: step 2/5. Its function is as follows. Catalyzes the transfer of the phosphoribosyl group of 5-phosphorylribose-1-pyrophosphate (PRPP) to anthranilate to yield N-(5'-phosphoribosyl)-anthranilate (PRA). This Dechloromonas aromatica (strain RCB) protein is Anthranilate phosphoribosyltransferase.